Reading from the N-terminus, the 131-residue chain is Sec-independent protein translocase protein TatB (131 aa).

A helical membrane pass occupies residues 2-22; the sequence is FANIGWWEMLVLVMVGLVVLG. The tract at residues 90 to 131 is disordered; sequence DSLFTGDFDRPTPKKPDAAGSAGPDATEQIGAGPIPFDSDAT. The segment covering 96–106 has biased composition (basic and acidic residues); sequence DFDRPTPKKPD.

The protein belongs to the TatB family. The Tat system comprises two distinct complexes: a TatABC complex, containing multiple copies of TatA, TatB and TatC subunits, and a separate TatA complex, containing only TatA subunits. Substrates initially bind to the TatABC complex, which probably triggers association of the separate TatA complex to form the active translocon.

Its subcellular location is the cell membrane. In terms of biological role, part of the twin-arginine translocation (Tat) system that transports large folded proteins containing a characteristic twin-arginine motif in their signal peptide across membranes. Together with TatC, TatB is part of a receptor directly interacting with Tat signal peptides. TatB may form an oligomeric binding site that transiently accommodates folded Tat precursor proteins before their translocation. The protein is Sec-independent protein translocase protein TatB of Mycobacterium tuberculosis (strain ATCC 25177 / H37Ra).